Consider the following 218-residue polypeptide: Ras-related protein Rab11E (218 aa).

20–27 (GDSGVGKS) contacts GTP. The Effector region signature appears at 42-50 (SKSTIGVEF). GTP is bound by residues 68-72 (DTAGQ) and 126-129 (NKSD). Residues C215 and C216 are each lipidated (S-geranylgeranyl cysteine).

Belongs to the small GTPase superfamily. Rab family.

It is found in the cell membrane. In Lotus japonicus (Lotus corniculatus var. japonicus), this protein is Ras-related protein Rab11E (RAB11E).